A 552-amino-acid polypeptide reads, in one-letter code: Protein FAM234A (552 aa).

Positions 1-22 (MLDHKDLEAEIHPLKNEERKSQ) are enriched in basic and acidic residues. A disordered region spans residues 1–40 (MLDHKDLEAEIHPLKNEERKSQENLGNPSKNEDNVKSAPP). The Cytoplasmic portion of the chain corresponds to 1 to 49 (MLDHKDLEAEIHPLKNEERKSQENLGNPSKNEDNVKSAPPQSRLSRCRA). Ser21 carries the phosphoserine modification. Residues 50-70 (AAFFLSLFLCLFVVFVVSFVI) form a helical; Signal-anchor for type II membrane protein membrane-spanning segment. Topologically, residues 71–552 (PCPDRPASQR…FSRLRYQSEA (482 aa)) are extracellular. Residues Asn116, Asn314, Asn389, and Asn473 are each glycosylated (N-linked (GlcNAc...) asparagine).

The protein belongs to the FAM234 family.

Its subcellular location is the membrane. The chain is Protein FAM234A from Homo sapiens (Human).